The primary structure comprises 158 residues: SsrA-binding protein (158 aa).

The segment at 132 to 158 (KKTHDKRETEKKRDWNREKARLMRDKG) is disordered. Positions 136-158 (DKRETEKKRDWNREKARLMRDKG) are enriched in basic and acidic residues.

Belongs to the SmpB family.

The protein localises to the cytoplasm. Required for rescue of stalled ribosomes mediated by trans-translation. Binds to transfer-messenger RNA (tmRNA), required for stable association of tmRNA with ribosomes. tmRNA and SmpB together mimic tRNA shape, replacing the anticodon stem-loop with SmpB. tmRNA is encoded by the ssrA gene; the 2 termini fold to resemble tRNA(Ala) and it encodes a 'tag peptide', a short internal open reading frame. During trans-translation Ala-aminoacylated tmRNA acts like a tRNA, entering the A-site of stalled ribosomes, displacing the stalled mRNA. The ribosome then switches to translate the ORF on the tmRNA; the nascent peptide is terminated with the 'tag peptide' encoded by the tmRNA and targeted for degradation. The ribosome is freed to recommence translation, which seems to be the essential function of trans-translation. This Brucella anthropi (strain ATCC 49188 / DSM 6882 / CCUG 24695 / JCM 21032 / LMG 3331 / NBRC 15819 / NCTC 12168 / Alc 37) (Ochrobactrum anthropi) protein is SsrA-binding protein.